Reading from the N-terminus, the 89-residue chain is MAKKSKIVKDQKQRELVLKYSKLRLELKKKADYAGLSQIPAKASPVRLKNRDSIDGRPRGYIRKFGISRINFRQLAHQGKLPGVRKTSW.

Belongs to the universal ribosomal protein uS14 family. In terms of assembly, part of the 30S ribosomal subunit. Contacts proteins S3 and S10.

Its function is as follows. Binds 16S rRNA, required for the assembly of 30S particles and may also be responsible for determining the conformation of the 16S rRNA at the A site. The protein is Small ribosomal subunit protein uS14 of Aster yellows witches'-broom phytoplasma (strain AYWB).